Consider the following 547-residue polypeptide: Ganoderic acid synthetase CYP5150L8 (547 aa).

Residues 2–22 (PDSSLVLVAIAGAAYIFWLVF) traverse the membrane as a helical segment. Cysteine 487 is a heme binding site.

The protein belongs to the cytochrome P450 family. Heme serves as cofactor.

The protein resides in the membrane. The enzyme catalyses lanosterol + reduced [NADPH--hemoprotein reductase] + O2 = 26-hydroxylanosterol + oxidized [NADPH--hemoprotein reductase] + H2O + H(+). It catalyses the reaction 26-hydroxylanosterol + reduced [NADPH--hemoprotein reductase] + O2 = 26-oxolanosterol + oxidized [NADPH--hemoprotein reductase] + 2 H2O + H(+). It carries out the reaction 26-oxolanosterol + reduced [NADPH--hemoprotein reductase] + O2 = 3beta-hydroxy-lanosta-8, 24-dien-26-oate + oxidized [NADPH--hemoprotein reductase] + H2O + 2 H(+). It functions in the pathway secondary metabolite biosynthesis; terpenoid biosynthesis. Cytochrome P450 monooxygenase that is involved in the biosynthesis of ganoderic acids (GA), a group of highly oxygenated lanostane-type triterpenoids which well recognized as a main group of unique bioactive compounds in the medicinal mushroom Ganoderma lucidum. CYP5150L8 alone is able to catalyze the three-step oxidations at C-26 from lanosterol to 3-hydroxy-lanosta-8,24-dien-26-oic acid (also called ganoderic acid Z or HLDOA). The methyl group of lanosterol at C-26 is first oxidized into hydroxyl group to form 3-hydroxy-lanosta-8,24-dien-26-ol (HLDO). The hydroxyl group at C-26 of HLDO is further converted into a formyl group to form 3-hydroxy-lanosta-8,24-dien-26-al (HLDA). Finally, the formyl group is oxidized into a carboxyl group to produce 3-hydroxy-lanosta-8,24-dien-26-oic acid (HLDOA). This is Ganoderic acid synthetase CYP5150L8 from Ganoderma lucidum (Ling zhi medicinal fungus).